The primary structure comprises 488 residues: MKEEKSFVKEITPQSEDFSRWYIDVIRKADLMDYTPVRGCIVFKPDGYELWERIQAGLDKRFKETGHRNAYFPMLIPESFFQKEKEHVEGFNPELPWVTEAGGEKLEERLALRPTSETIIGHMYAQWIQSYRDLPVLINQWANVFRWEKRTLPFLRTSEFLWQEGHTAHATEEEAREETMRMLEVYRDFVETEMAIPLYVGQKTPSEKFAGAVDTYSIEAMMKDGKALQAGTSHYLGQNFAKGFEIKFLDRDNQLKYVHTTSWGVSTRLIGALIMVHGDDRGLALPPRLAPIQVIMIPVGPPKFRDKVMARFDPLFDALKAAGVRVKADLREETPGWKFNEWEMRGVPLRIEIGPRDVDNKQCLMVRRDTGEKIPVPLDEAVERVQALLEEIQRNMFVKAKEFRDAHSHLHINTLAELKAHIARCEETGEIAGFVLAGWCGDAACEAKVKEETKFTSRNIPFHPPARKQVCLCCGKEAQHTVWFARAY.

Belongs to the class-II aminoacyl-tRNA synthetase family. ProS type 3 subfamily. Homodimer.

It is found in the cytoplasm. The catalysed reaction is tRNA(Pro) + L-proline + ATP = L-prolyl-tRNA(Pro) + AMP + diphosphate. In terms of biological role, catalyzes the attachment of proline to tRNA(Pro) in a two-step reaction: proline is first activated by ATP to form Pro-AMP and then transferred to the acceptor end of tRNA(Pro). The polypeptide is Proline--tRNA ligase (Symbiobacterium thermophilum (strain DSM 24528 / JCM 14929 / IAM 14863 / T)).